Here is a 216-residue protein sequence, read N- to C-terminus: MOB kinase activator 1A (216 aa).

At Ser2 the chain carries N-acetylserine. Phosphothreonine is present on residues Thr12 and Thr35. Phosphothreonine; by STK3/MST2 is present on Thr74. Zn(2+) contacts are provided by Cys79, Cys84, His161, and His166. A Phosphothreonine modification is found at Thr181.

It belongs to the MOB1/phocein family. In terms of assembly, binds STK38 and STK38L. Interacts with LATS1 and LATS2. Forms a tripartite complex with STK38 and STK3/MST2. Phosphorylated by STK3/MST2 and STK4/MST1 and this phosphorylation enhances its binding to LATS1. In terms of tissue distribution, adrenal gland, bone marrow, brain, placenta, prostate, salivary gland, skeletal muscle, testis, thymus, thyroid gland, heart, spinal cord, fetal brain and fetal liver.

Its function is as follows. Activator of LATS1/2 in the Hippo signaling pathway which plays a pivotal role in organ size control and tumor suppression by restricting proliferation and promoting apoptosis. The core of this pathway is composed of a kinase cascade wherein STK3/MST2 and STK4/MST1, in complex with its regulatory protein SAV1, phosphorylates and activates LATS1/2 in complex with its regulatory protein MOB1, which in turn phosphorylates and inactivates YAP1 oncoprotein and WWTR1/TAZ. Phosphorylation of YAP1 by LATS1/2 inhibits its translocation into the nucleus to regulate cellular genes important for cell proliferation, cell death, and cell migration. Stimulates the kinase activity of STK38 and STK38L. Acts cooperatively with STK3/MST2 to activate STK38. The polypeptide is MOB kinase activator 1A (Homo sapiens (Human)).